Reading from the N-terminus, the 231-residue chain is MAKKGKKYQEAAQKVDSTKFYSVEEAIKLAKETSTVNFDASVEVAFRLGIDVRKNDQQIRGAVVLPNGTGKTQRVLVFAKGEKLKEAEAAGADFVGDSEYINKINQGWFDFDVIVATPDMMGEVGKLGRVLGPKGLMPNPKTGTVTMDVTKAVQEIKAGKVEYRAEKSGIVHAAIGKVSFDADKLVENFNTLKDVLAKAKPASSKGTYFKTVAVTTTMGPGIKIDPSEVRN.

It belongs to the universal ribosomal protein uL1 family. Part of the 50S ribosomal subunit.

In terms of biological role, binds directly to 23S rRNA. The L1 stalk is quite mobile in the ribosome, and is involved in E site tRNA release. Its function is as follows. Protein L1 is also a translational repressor protein, it controls the translation of the L11 operon by binding to its mRNA. The chain is Large ribosomal subunit protein uL1 from Macrococcus caseolyticus (strain JCSC5402) (Macrococcoides caseolyticum).